The primary structure comprises 748 residues: Pentatricopeptide repeat-containing protein At3g13880 (748 aa).

17 PPR repeats span residues 46–80, 81–111, 112–146, 147–181, 182–212, 213–247, 248–285, 286–316, 317–356, 357–391, 392–422, 423–457, 458–492, 493–523, 524–558, 559–589, and 595–629; these read DSEG…SLNP, CLYL…MPER, NIIS…NLKL, DKFT…GLSQ, QVFL…CDER, DQVS…GLNL, TTYA…GMEF, DIVV…MPSK, NVVT…GLEP, SPST…NFQS, DEFI…TSKQ, DIAS…HIRP, EEYT…GIDA, FTSV…VQNP, DVAT…GIKP, NQQA…MKND, and NEKH…DHPV. Residues 630-705 are type E motif; sequence TWRALLSSCR…EPALSWIVIG (76 aa). A type E(+) motif region spans residues 706–736; it reads NQTHSFAVADLSHPSSQMIYTMLETMDNVDF.

It belongs to the PPR family. PCMP-E subfamily.

The sequence is that of Pentatricopeptide repeat-containing protein At3g13880 (PCMP-E89) from Arabidopsis thaliana (Mouse-ear cress).